The primary structure comprises 101 residues: Small integral membrane protein 14 (101 aa).

The span at 71-81 shows a compositional bias: basic and acidic residues; that stretch reads SDRRTADDAAI. The tract at residues 71–101 is disordered; the sequence is SDRRTADDAAIEKPTGSSDDNTPPPPPPSAM. The segment covering 92–101 has biased composition (pro residues); that stretch reads TPPPPPPSAM.

The protein is Small integral membrane protein 14 of Caenorhabditis elegans.